We begin with the raw amino-acid sequence, 591 residues long: Metalloendopeptidase OPG085 (591 aa).

Position 41 (histidine 41) interacts with Zn(2+). Residue glutamate 44 is part of the active site. Position 45 (histidine 45) interacts with Zn(2+).

Belongs to the peptidase M44 family. Zn(2+) is required as a cofactor. In terms of processing, undergoes proteolytic processing during the course of infection. May be cleaved into 46 kDa and 22 kDa products (Potential).

It localises to the virion. In terms of biological role, probably involved in maturation of some viral proteins by processing them preferentially at Ala-Gly-|-Ser/Thr/Lys motifs. Does not seem to be responsible for the cleavage of major core proteins. The sequence is that of Metalloendopeptidase OPG085 (OPG085) from Homo sapiens (Human).